The chain runs to 127 residues: Small ribosomal subunit protein uS11 (127 aa).

Belongs to the universal ribosomal protein uS11 family. Part of the 30S ribosomal subunit. Interacts with proteins S7 and S18. Binds to IF-3.

Its function is as follows. Located on the platform of the 30S subunit, it bridges several disparate RNA helices of the 16S rRNA. Forms part of the Shine-Dalgarno cleft in the 70S ribosome. The sequence is that of Small ribosomal subunit protein uS11 from Pelodictyon phaeoclathratiforme (strain DSM 5477 / BU-1).